Reading from the N-terminus, the 734-residue chain is MSDKDRIAQLLRELEEAKARVEEAKAREAQERCEKERLQLEHRKTTFLEYLRNCHRHLYNALRLTDTSRSSTGYTKVVGKYYPKRLRPWTNFANVLHPRYFDLVQKICGQRQLFEPASTTKNLGTIISDHLAGNEKAIDRFEVDAVERPVQAILKVLATHEEAGKAYRCPEFRFSANLRELTQEDDGSSGADDNTSDGSLERRQQAGPNKRPTSKRKYICSNRQPDGVGIRMQPGGGQTQAFIYDYKAAHKVAIEHVRSATAKEHLFHEVVARINDNKLSRDKEVQRREQAEAFIAMALTQVFDYMITYGVSYGYVAAGRCLLLLYVDRDDWQTLYCHPCLPADDVGEPTNDWTDRLSHTAVAQLVSFCLSSFQSEALEGQSLETALSVANATLKTWSESYADVAYLGLEPAELSSAPSSQNTDISEYTSKAKPTGRNVALRSQSSCKPAAVLPQGNEHDEHDEDHSEPGASRSRLAANKRKRGPSSGGEDEDIAMADPEPTRQYCTQACLLGLKRGKDLDENCPNVSLHRFDGSSRHPVNAHRFTDMVKQQLLLSPYKGCRMVDFWGKRGAMGWLFKLELFPYGYTFVGKGTLEDRLSRLEHEGRVYARLDHLQGDVVPVHLGLVRLDRGYILPGLEFVVYMMLMSWAGQTPSASMADAETLKRESLTAIWSEGVDHGDDNRANYLWNAERCRIMIIDFDRARLFPPLKPRAVSRLSKPKRERGNRSRHQIRT.

A coiled-coil region spans residues Lys4–Glu41. 2 disordered regions span residues Glu180–Asn222 and Leu414–Pro499. A compositionally biased stretch (polar residues) spans Ser416–Thr429. Over residues Asn457–Glu468 the composition is skewed to basic and acidic residues.

The protein resides in the cytoplasm. Its subcellular location is the nucleus. Its function is as follows. Promotes unequal transmission of alleles from the parental zygote to progeny spores by acting as poison/antidote system, leading to poisoning of progeny that do not inherit the allele. May possess DNA nuclease activity that leads to spore killing, and a kinase activity that confers resistance to the nuclease activity. Can suppress meiotic drive by the P.anserina SPOK2, SPOK3 and SPOK4 proteins. This Podospora comata protein is Meiotic driver SPOK1.